A 142-amino-acid polypeptide reads, in one-letter code: Large ribosomal subunit protein cL37 alpha (142 aa).

A chloroplast-targeting transit peptide spans 1-62 (MALLSPLLSL…AQKRGTVVAM (62 aa)). Residues 123-142 (RKLRKRGAWPPSKMKKLKNV) form a disordered region.

Belongs to the chloroplast-specific ribosomal protein cL37 family. Component of the chloroplast large ribosomal subunit (LSU). Mature 70S chloroplast ribosomes of higher plants consist of a small (30S) and a large (50S) subunit. The 30S small subunit contains 1 molecule of ribosomal RNA (16S rRNA) and 24 different proteins. The 50S large subunit contains 3 rRNA molecules (23S, 5S and 4.5S rRNA) and 33 different proteins.

The protein resides in the plastid. It is found in the chloroplast. Component of the chloroplast ribosome (chloro-ribosome), a dedicated translation machinery responsible for the synthesis of chloroplast genome-encoded proteins, including proteins of the transcription and translation machinery and components of the photosynthetic apparatus. In Spinacia oleracea (Spinach), this protein is Large ribosomal subunit protein cL37 alpha (PSRP5).